The following is a 179-amino-acid chain: Sec-independent protein translocase protein TatB (179 aa).

The helical transmembrane segment at 2–22 (FNGVGWGEVVVLLLIGLFVFG) threads the bilayer. Residues 98–109 (LLGDDPPAAPSL) show a composition bias toward low complexity. The interval 98-179 (LLGDDPPAAP…TEVPFDSDAT (82 aa)) is disordered.

The protein belongs to the TatB family. In terms of assembly, the Tat system comprises two distinct complexes: a TatABC complex, containing multiple copies of TatA, TatB and TatC subunits, and a separate TatA complex, containing only TatA subunits. Substrates initially bind to the TatABC complex, which probably triggers association of the separate TatA complex to form the active translocon.

Its subcellular location is the cell membrane. In terms of biological role, part of the twin-arginine translocation (Tat) system that transports large folded proteins containing a characteristic twin-arginine motif in their signal peptide across membranes. Together with TatC, TatB is part of a receptor directly interacting with Tat signal peptides. TatB may form an oligomeric binding site that transiently accommodates folded Tat precursor proteins before their translocation. The polypeptide is Sec-independent protein translocase protein TatB (Frankia casuarinae (strain DSM 45818 / CECT 9043 / HFP020203 / CcI3)).